Consider the following 222-residue polypeptide: Pyridoxine/pyridoxamine 5'-phosphate oxidase (222 aa).

Substrate contacts are provided by residues 14–17 (RRNY) and K71. FMN is bound by residues 66 to 71 (RTVLLK), 81 to 82 (FT), R87, K88, and Q110. 3 residues coordinate substrate: Y128, R132, and S136. Residues 145–146 (QS) and W190 contribute to the FMN site. Residue 196-198 (RLN) coordinates substrate. R200 contributes to the FMN binding site.

It belongs to the pyridoxamine 5'-phosphate oxidase family. As to quaternary structure, homodimer. FMN is required as a cofactor.

The enzyme catalyses pyridoxamine 5'-phosphate + O2 + H2O = pyridoxal 5'-phosphate + H2O2 + NH4(+). The catalysed reaction is pyridoxine 5'-phosphate + O2 = pyridoxal 5'-phosphate + H2O2. Its pathway is cofactor metabolism; pyridoxal 5'-phosphate salvage; pyridoxal 5'-phosphate from pyridoxamine 5'-phosphate: step 1/1. It functions in the pathway cofactor metabolism; pyridoxal 5'-phosphate salvage; pyridoxal 5'-phosphate from pyridoxine 5'-phosphate: step 1/1. In terms of biological role, catalyzes the oxidation of either pyridoxine 5'-phosphate (PNP) or pyridoxamine 5'-phosphate (PMP) into pyridoxal 5'-phosphate (PLP). The chain is Pyridoxine/pyridoxamine 5'-phosphate oxidase from Prochlorococcus marinus (strain MIT 9303).